Reading from the N-terminus, the 878-residue chain is Leucine--tRNA ligase (878 aa).

A 'HIGH' region motif is present at residues 43 to 53; sequence PYPSGRIHIGH. The short motif at 630 to 634 is the 'KMSKS' region element; it reads KMSKS. Lys-633 is an ATP binding site.

This sequence belongs to the class-I aminoacyl-tRNA synthetase family.

Its subcellular location is the cytoplasm. It carries out the reaction tRNA(Leu) + L-leucine + ATP = L-leucyl-tRNA(Leu) + AMP + diphosphate. The chain is Leucine--tRNA ligase from Nitrobacter hamburgensis (strain DSM 10229 / NCIMB 13809 / X14).